Here is a 338-residue protein sequence, read N- to C-terminus: 4-hydroxythreonine-4-phosphate dehydrogenase (338 aa).

Substrate contacts are provided by H139 and T140. The a divalent metal cation site is built by H169, H214, and H270. Positions 278, 287, and 296 each coordinate substrate.

It belongs to the PdxA family. As to quaternary structure, homodimer. It depends on Zn(2+) as a cofactor. Mg(2+) serves as cofactor. The cofactor is Co(2+).

It is found in the cytoplasm. The catalysed reaction is 4-(phosphooxy)-L-threonine + NAD(+) = 3-amino-2-oxopropyl phosphate + CO2 + NADH. It participates in cofactor biosynthesis; pyridoxine 5'-phosphate biosynthesis; pyridoxine 5'-phosphate from D-erythrose 4-phosphate: step 4/5. Catalyzes the NAD(P)-dependent oxidation of 4-(phosphooxy)-L-threonine (HTP) into 2-amino-3-oxo-4-(phosphooxy)butyric acid which spontaneously decarboxylates to form 3-amino-2-oxopropyl phosphate (AHAP). The polypeptide is 4-hydroxythreonine-4-phosphate dehydrogenase (Desulfosudis oleivorans (strain DSM 6200 / JCM 39069 / Hxd3) (Desulfococcus oleovorans)).